The chain runs to 283 residues: Pantothenate synthetase (283 aa).

An ATP-binding site is contributed by 30–37; the sequence is MGNLHSGH. H37 serves as the catalytic Proton donor. Q61 contacts (R)-pantoate. Position 61 (Q61) interacts with beta-alanine. 149–152 provides a ligand contact to ATP; that stretch reads GEKD. Residue Q155 participates in (R)-pantoate binding. ATP-binding positions include V178 and 186–189; that span reads LSSR.

This sequence belongs to the pantothenate synthetase family. As to quaternary structure, homodimer.

The protein resides in the cytoplasm. The enzyme catalyses (R)-pantoate + beta-alanine + ATP = (R)-pantothenate + AMP + diphosphate + H(+). It participates in cofactor biosynthesis; (R)-pantothenate biosynthesis; (R)-pantothenate from (R)-pantoate and beta-alanine: step 1/1. Functionally, catalyzes the condensation of pantoate with beta-alanine in an ATP-dependent reaction via a pantoyl-adenylate intermediate. This chain is Pantothenate synthetase, found in Pseudomonas savastanoi pv. phaseolicola (strain 1448A / Race 6) (Pseudomonas syringae pv. phaseolicola (strain 1448A / Race 6)).